Reading from the N-terminus, the 264-residue chain is Thymidylate synthase (264 aa).

Position 21 (Arg21) interacts with dUMP. A (6R)-5,10-methylene-5,6,7,8-tetrahydrofolate-binding site is contributed by His51. 126–127 (RR) is a dUMP binding site. The active-site Nucleophile is the Cys146. Residues 166–169 (RSCD), Asn177, and 207–209 (HLY) contribute to the dUMP site. Asp169 contacts (6R)-5,10-methylene-5,6,7,8-tetrahydrofolate. Position 263 (Ser263) interacts with (6R)-5,10-methylene-5,6,7,8-tetrahydrofolate.

This sequence belongs to the thymidylate synthase family. Bacterial-type ThyA subfamily. Homodimer.

It is found in the cytoplasm. The catalysed reaction is dUMP + (6R)-5,10-methylene-5,6,7,8-tetrahydrofolate = 7,8-dihydrofolate + dTMP. It functions in the pathway pyrimidine metabolism; dTTP biosynthesis. In terms of biological role, catalyzes the reductive methylation of 2'-deoxyuridine-5'-monophosphate (dUMP) to 2'-deoxythymidine-5'-monophosphate (dTMP) while utilizing 5,10-methylenetetrahydrofolate (mTHF) as the methyl donor and reductant in the reaction, yielding dihydrofolate (DHF) as a by-product. This enzymatic reaction provides an intracellular de novo source of dTMP, an essential precursor for DNA biosynthesis. This chain is Thymidylate synthase, found in Buchnera aphidicola subsp. Schizaphis graminum (strain Sg).